The following is a 260-amino-acid chain: Thiazole synthase (260 aa).

The active-site Schiff-base intermediate with DXP is Lys-96. 1-deoxy-D-xylulose 5-phosphate-binding positions include Gly-157, 184 to 185 (AG), and 206 to 207 (NT).

It belongs to the ThiG family. Homotetramer. Forms heterodimers with either ThiH or ThiS.

It is found in the cytoplasm. The enzyme catalyses [ThiS sulfur-carrier protein]-C-terminal-Gly-aminoethanethioate + 2-iminoacetate + 1-deoxy-D-xylulose 5-phosphate = [ThiS sulfur-carrier protein]-C-terminal Gly-Gly + 2-[(2R,5Z)-2-carboxy-4-methylthiazol-5(2H)-ylidene]ethyl phosphate + 2 H2O + H(+). It participates in cofactor biosynthesis; thiamine diphosphate biosynthesis. Catalyzes the rearrangement of 1-deoxy-D-xylulose 5-phosphate (DXP) to produce the thiazole phosphate moiety of thiamine. Sulfur is provided by the thiocarboxylate moiety of the carrier protein ThiS. In vitro, sulfur can be provided by H(2)S. The sequence is that of Thiazole synthase from Rhodopseudomonas palustris (strain BisB5).